The primary structure comprises 168 residues: Cytolysin secretion protein (168 aa).

This chain is Cytolysin secretion protein (vvhB), found in Vibrio vulnificus (strain CMCP6).